An 804-amino-acid polypeptide reads, in one-letter code: Leucine--tRNA ligase (804 aa).

Residues 40-51 (PYPSGAGLHVGH) carry the 'HIGH' region motif. The 'KMSKS' region motif lies at 576 to 580 (KMSKS). Lys579 lines the ATP pocket.

Belongs to the class-I aminoacyl-tRNA synthetase family.

It is found in the cytoplasm. It catalyses the reaction tRNA(Leu) + L-leucine + ATP = L-leucyl-tRNA(Leu) + AMP + diphosphate. The protein is Leucine--tRNA ligase of Staphylococcus epidermidis (strain ATCC 35984 / DSM 28319 / BCRC 17069 / CCUG 31568 / BM 3577 / RP62A).